The following is a 325-amino-acid chain: NADH-quinone oxidoreductase subunit H (325 aa).

8 helical membrane passes run 11–31 (ILISIVKAVVILLVVVTCGAF), 81–101 (VIFTLAPMIAFTSLLLAFAIV), 114–134 (IGILFFLMMAGLAVYAVLFAG), 149–169 (ASAQTLSYEVFIGLSLMGVVA), 186–206 (MWNVIPQFFGFITFAIAGVAV), 237–257 (FFVGEYIGIVTVSALIVTLFF), 265–285 (LPPFVWFALKTAFFMMMFILI), and 304–324 (VCLPLTLLNLLATAAVILYNA).

The protein belongs to the complex I subunit 1 family. In terms of assembly, NDH-1 is composed of 13 different subunits. Subunits NuoA, H, J, K, L, M, N constitute the membrane sector of the complex.

The protein localises to the cell inner membrane. The enzyme catalyses a quinone + NADH + 5 H(+)(in) = a quinol + NAD(+) + 4 H(+)(out). NDH-1 shuttles electrons from NADH, via FMN and iron-sulfur (Fe-S) centers, to quinones in the respiratory chain. The immediate electron acceptor for the enzyme in this species is believed to be ubiquinone. Couples the redox reaction to proton translocation (for every two electrons transferred, four hydrogen ions are translocated across the cytoplasmic membrane), and thus conserves the redox energy in a proton gradient. This subunit may bind ubiquinone. This chain is NADH-quinone oxidoreductase subunit H, found in Serratia proteamaculans (strain 568).